We begin with the raw amino-acid sequence, 638 residues long: Chaperone protein HtpG (638 aa).

Residues 1 to 343 (MTSTIDSDGA…SADLPLNISR (343 aa)) form an a; substrate-binding region. The interval 344–557 (EMIQESPILA…ESGPDRQLEK (214 aa)) is b. The segment at 558–638 (ILVGVGQLTG…VERGLRGSTA (81 aa)) is c.

This sequence belongs to the heat shock protein 90 family. Homodimer.

It is found in the cytoplasm. In terms of biological role, molecular chaperone. Has ATPase activity. This chain is Chaperone protein HtpG, found in Nitrobacter hamburgensis (strain DSM 10229 / NCIMB 13809 / X14).